A 278-amino-acid chain; its full sequence is Juvenile hormone acid O-methyltransferase (278 aa).

It belongs to the methyltransferase superfamily. In terms of tissue distribution, specifically expressed in the corpora allata (CA).

The catalysed reaction is (2E,6E)-farnesoate + S-adenosyl-L-methionine = methyl (2E,6E)-farnesoate + S-adenosyl-L-homocysteine. It catalyses the reaction juvenile hormone III carboxylate + S-adenosyl-L-methionine = juvenile hormone III + S-adenosyl-L-homocysteine. Its function is as follows. O-methyltransferase that transfers a methyl group from S-adenosyl-L-methionine (SAM) to the carboxyl group of juvenile hormone acids to produce active juvenile hormones in the corpora allata, the last step during juvenile hormone biosynthesis. Also able to methylate farnesoate to methyl farnesoate. This is Juvenile hormone acid O-methyltransferase from Bombyx mori (Silk moth).